A 493-amino-acid polypeptide reads, in one-letter code: Glutamyl-tRNA(Gln) amidotransferase subunit A (493 aa).

Residues lysine 78 and serine 158 each act as charge relay system in the active site. The Acyl-ester intermediate role is filled by serine 182.

This sequence belongs to the amidase family. GatA subfamily. In terms of assembly, heterotrimer of A, B and C subunits.

It catalyses the reaction L-glutamyl-tRNA(Gln) + L-glutamine + ATP + H2O = L-glutaminyl-tRNA(Gln) + L-glutamate + ADP + phosphate + H(+). Allows the formation of correctly charged Gln-tRNA(Gln) through the transamidation of misacylated Glu-tRNA(Gln) in organisms which lack glutaminyl-tRNA synthetase. The reaction takes place in the presence of glutamine and ATP through an activated gamma-phospho-Glu-tRNA(Gln). This is Glutamyl-tRNA(Gln) amidotransferase subunit A from Methylorubrum extorquens (strain CM4 / NCIMB 13688) (Methylobacterium extorquens).